The following is a 2291-amino-acid chain: Protein Ycf2 (2291 aa).

1645–1652 (GSIGTGRS) is an ATP binding site.

It belongs to the Ycf2 family.

It is found in the plastid. The protein localises to the chloroplast stroma. In terms of biological role, probable ATPase of unknown function. Its presence in a non-photosynthetic plant (Epifagus virginiana) and experiments in tobacco indicate that it has an essential function which is probably not related to photosynthesis. This Olimarabidopsis pumila (Dwarf rocket) protein is Protein Ycf2.